We begin with the raw amino-acid sequence, 1384 residues long: MTSYSFTEKKRIRKDFGKHRSILKVPFLLAIQVDSYRAFLQGDVESSQRKDIGLHGALKSVFPIVSYSGNAALEYVGYKLGEPMFDERECRQRGMSYGAPLRVTVRLVIYDRESSTKAVKYIKEQEVYLGEIPLMTENGTFIVNGTERVIVSQLHRSPGVFFDHDRGKTHSSGKLLYSARIIPCRGSWLDFEFDPKDALFTRIDRRRKLPVSILLRALGYSNEEILGEFFEINTFHINPDEGVQLELVPERLRGEILSFNLTDGGSVIVEAGKRITARHVKQLEASGISALAVPDEYLIGRILSHDVIDATTGELLASANSEVNEDRIIAFRKAGIESVGTLWVNDLDRGAYLSNTLRIDPTRTQLEAQVEIYRMMRPGEPPTKEAAQNLFHNLFFTFDRYDLSMVGRMKFNRRVGRKEVAGEPVLYDKKYFSDRNDEESRRLVSKLGETSDILDVIKGLCEIRNGRGVVDDIDHLGNRRVRSVGEMAENVFRVGLVRVERAVKERLSMAESEGLTPQELINAKPVAAAIKEFFGSSQLSQFMDQNNPLSEVTHKRRLSALGPGGLTRERAGFEVRDVHLSHYGCLCTIETPEGPNIGLINSLAVFARTNQYGFLETPYRKVVEGRVTDEVEYLSAIEENQYVIAQANTLTDDNGQLTESFVPCRFQGESLLKPPSYVHYMDVSPMQTVSVAAALVPFLEHDDANRALMGANMQRQAVPTLRAQKPLVGTGIERTVARDSGVTVNARRGGVIDQVDAGRIVVKVNESEIIGATDAGVDIYGLIKYTRSNQNTCINQRPLVNVGDIVASGDVLADGPSTDIGELALGQNMLIAFMPWNGYNFEDSILLSERVVEEDRYTTIHIEELTCIARDTKLGSEEISADIPNVSEQALNRLDESGVVYIGAEVRAGDILVGKVTPKGESQLTPEEKLLRAIFGEKASDVKDSSLRVPPGMDGTVIDVQVFTRDGIEKDKRAHQIEEYEIKRVKKDFDDQFRILEGAIYARLRSQIVGKVVNSGVDIKKGEVITDPYLDGLKKSDWFALRMKDEVAVEAIDRAQKQIQAYQKEFDQRFSDKRSKITQGDDLAPGVLKMVKVFLAVKRCIQCGDKMAGRHGNKGVISNVVPVEDMPFMEDGTPVDIVLNPLGVPSRMNIGQILEVHLGWAAKGLGHRIQRMLEANAAIADLRKFLNEIYNHDKSLVGERVDLSQFSDDELLNMAKNLTDGVPMASPVFDGASEQEIKRMLDLAELPAGGQTQLYDGHTGEPFDRKTTVGYMHYLKLNHLVDDKMHARSTGPYSLVTQQPLGGKAQFGGQRFGEMEVWALEAYGAAYTLQEMLTVKSDDVQGRNQMYKNIVDGDHQMVAGMPESFNVLVKEIRSLAINIELEDN.

The protein belongs to the RNA polymerase beta chain family. In terms of assembly, the RNAP catalytic core consists of 2 alpha, 1 beta, 1 beta' and 1 omega subunit. When a sigma factor is associated with the core the holoenzyme is formed, which can initiate transcription.

It catalyses the reaction RNA(n) + a ribonucleoside 5'-triphosphate = RNA(n+1) + diphosphate. In terms of biological role, DNA-dependent RNA polymerase catalyzes the transcription of DNA into RNA using the four ribonucleoside triphosphates as substrates. This is DNA-directed RNA polymerase subunit beta from Xylella fastidiosa (strain M23).